Reading from the N-terminus, the 281-residue chain is MSRWLMQMLMLPLLLLPLGQAAPKDGVARLDPEAQQQLTTNPFQPGPEQLRRLRDYLKGLEKMEEDPEQMNREQVLLYLFALHDFDQNGQLDGLELLSMLTAALAPGAAHFPINPVILVVDMVLETQDLDGDGLMTPAELINFPGEAPKRAESLPPALQEPQPAGSQPLLANSPLQSETQQSLGTKEEITSQVEAKRALEPEQEAGHHIETKVDALSPEGEARGQAESEGDAPGPREDAERQVESKDNEGEAKDLPAETLETQNTPNVVEAHSIQLENDEI.

An N-terminal signal peptide occupies residues 1–21 (MSRWLMQMLMLPLLLLPLGQA). EF-hand domains follow at residues 71-106 (NREQ…ALAP) and 115-150 (PVIL…APKR). Residues Asp-84, Asp-86, Asn-88, Gln-90, Glu-95, Asp-128, Asp-130, Asp-132, and Glu-139 each coordinate Ca(2+). Positions 146–281 (EAPKRAESLP…HSIQLENDEI (136 aa)) are disordered. A compositionally biased stretch (polar residues) spans 169–184 (LLANSPLQSETQQSLG). Residues 185–213 (TKEEITSQVEAKRALEPEQEAGHHIETKV) are compositionally biased toward basic and acidic residues. Residues Ser-217 and Ser-228 each carry the phosphoserine modification. Positions 234–256 (GPREDAERQVESKDNEGEAKDLP) are enriched in basic and acidic residues.

In terms of processing, probably digested extracellularly by an unknown serine protease generating extremely hydrophobic bioactive peptides. In terms of tissue distribution, expressed predominantly in whole brain and kidney, with limited expression in heart, lung, liver, and skeletal muscle and no expression in spleen and testis. Also expressed in pituitary gland, adrenal gland, digestive tract, and reproductive organs.

Its subcellular location is the secreted. Mediates cell-cell adhesion in a calcium-dependent manner. Able to inhibit growth in several cell lines. The sequence is that of Cell growth regulator with EF hand domain protein 1 from Rattus norvegicus (Rat).